A 90-amino-acid polypeptide reads, in one-letter code: U7-theraphotoxin-Hhn1b (90 aa).

Residues 1-19 (MKTAIFTVVLALAVFAVLS) form the signal peptide. The propeptide occupies 20-50 (FGWEANEKALSEEFTELIHEKEAASETEARE). 3 cysteine pairs are disulfide-bonded: C51–C65, C58–C70, and C64–C81.

The protein belongs to the neurotoxin 10 (Hwtx-1) family. 13 (Hntx-13) subfamily. Expressed by the venom gland.

The protein resides in the secreted. In terms of biological role, ion channel inhibitor. The chain is U7-theraphotoxin-Hhn1b from Cyriopagopus hainanus (Chinese bird spider).